The primary structure comprises 441 residues: Eukaryotic peptide chain release factor subunit 1 (441 aa).

It belongs to the eukaryotic release factor 1 family. Heterodimer of two subunits, one of which binds GTP.

The protein localises to the cytoplasm. In terms of biological role, directs the termination of nascent peptide synthesis (translation) in response to the termination codons UAA, UAG and UGA. The polypeptide is Eukaryotic peptide chain release factor subunit 1 (erf1) (Dictyostelium discoideum (Social amoeba)).